Reading from the N-terminus, the 198-residue chain is Na(+)-translocating NADH-quinone reductase subunit E (198 aa).

The next 6 helical transmembrane spans lie at 11–31 (SVFI…FLAV), 35–55 (VSTA…AVPV), 77–97 (FLNF…LEMI), 110–130 (GIFL…SFMV), 140–160 (VVYG…LAGL), and 176–196 (LGIT…FSGI).

Belongs to the NqrDE/RnfAE family. As to quaternary structure, composed of six subunits; NqrA, NqrB, NqrC, NqrD, NqrE and NqrF.

It localises to the cell inner membrane. It catalyses the reaction a ubiquinone + n Na(+)(in) + NADH + H(+) = a ubiquinol + n Na(+)(out) + NAD(+). In terms of biological role, NQR complex catalyzes the reduction of ubiquinone-1 to ubiquinol by two successive reactions, coupled with the transport of Na(+) ions from the cytoplasm to the periplasm. NqrA to NqrE are probably involved in the second step, the conversion of ubisemiquinone to ubiquinol. In Haemophilus ducreyi (strain 35000HP / ATCC 700724), this protein is Na(+)-translocating NADH-quinone reductase subunit E.